A 213-amino-acid polypeptide reads, in one-letter code: Na(+)-translocating NADH-quinone reductase subunit D (213 aa).

7 helical membrane passes run 21–41 (ILIA…VQTA), 42–62 (ITMG…VSLL), 77–97 (IIIS…FFDI), 101–121 (LSVF…SESL), 131–151 (FLDG…IGVI), 153–173 (ELFG…VYAS), and 183–203 (LSLM…IWLV).

Belongs to the NqrDE/RnfAE family. As to quaternary structure, composed of six subunits; NqrA, NqrB, NqrC, NqrD, NqrE and NqrF.

Its subcellular location is the cell inner membrane. It catalyses the reaction a ubiquinone + n Na(+)(in) + NADH + H(+) = a ubiquinol + n Na(+)(out) + NAD(+). NQR complex catalyzes the reduction of ubiquinone-1 to ubiquinol by two successive reactions, coupled with the transport of Na(+) ions from the cytoplasm to the periplasm. NqrA to NqrE are probably involved in the second step, the conversion of ubisemiquinone to ubiquinol. The protein is Na(+)-translocating NADH-quinone reductase subunit D of Chlamydia pneumoniae (Chlamydophila pneumoniae).